The following is a 97-amino-acid chain: Large ribosomal subunit protein uL23 (97 aa).

The protein belongs to the universal ribosomal protein uL23 family. In terms of assembly, part of the 50S ribosomal subunit. Contacts protein L29, and trigger factor when it is bound to the ribosome.

Its function is as follows. One of the early assembly proteins it binds 23S rRNA. One of the proteins that surrounds the polypeptide exit tunnel on the outside of the ribosome. Forms the main docking site for trigger factor binding to the ribosome. The polypeptide is Large ribosomal subunit protein uL23 (Marinobacter nauticus (strain ATCC 700491 / DSM 11845 / VT8) (Marinobacter aquaeolei)).